The sequence spans 660 residues: Genome-linked protein precursor (660 aa).

An N-terminal signal peptide occupies residues 1–25 (MALLGIKLMTLVFAAWLSCCHSSSA). 2 helical membrane passes run 131–151 (AVGMLLMIIIWIWSSIFLVVY) and 165–185 (AVCVGFLIFCTICAFRLISWI). One can recognise a Peptidase S39 domain in the interval 224–416 (VEGYKPFIIP…GLTSPDFKFE (193 aa)). Residues His272, Asp304, and Ser373 each act as for protease activity in the active site. 2 disordered regions span residues 463–490 (EEESESDDERGKVVPPAKPSNYGEGCPP) and 595–660 (TKAP…AWVR).

This sequence belongs to the peptidase S39B family.

The protein resides in the host membrane. Its function is as follows. Precursor from which the VPg molecule is probably released at the onset of the RNA synthesis. Essential for virus replication. The protein is Genome-linked protein precursor of Euphorbia pulcherrima (Poinsettia).